The primary structure comprises 462 residues: Glycine--tRNA ligase (462 aa).

Substrate is bound by residues arginine 100 and glutamate 174. Residues 206–208, 216–221, 290–291, and 334–337 contribute to the ATP site; these read RNE, FRTREF, EL, and GADR. Position 221–225 (221–225) interacts with substrate; sequence FEQME. A substrate-binding site is contributed by 330-334; sequence EPSLG.

Belongs to the class-II aminoacyl-tRNA synthetase family. In terms of assembly, homodimer.

It localises to the cytoplasm. It carries out the reaction tRNA(Gly) + glycine + ATP = glycyl-tRNA(Gly) + AMP + diphosphate. In terms of biological role, catalyzes the attachment of glycine to tRNA(Gly). The chain is Glycine--tRNA ligase from Ruminiclostridium cellulolyticum (strain ATCC 35319 / DSM 5812 / JCM 6584 / H10) (Clostridium cellulolyticum).